A 1470-amino-acid chain; its full sequence is Guanine nucleotide exchange factor subunit R06F6.8 (1470 aa).

WD repeat units follow at residues 20–58, 68–107, and 472–512; these read STAADIKSIVANRDRRLIAVATNDAIYIWLANPQLLLCS, ETRGELKEIYWKPDSTSIAVTTNQCKILIYNLDLRDDEQC, and AYCS…VVGV. 4 disordered regions span residues 673–710, 975–1001, 1017–1045, and 1238–1259; these read QSQNQDLPWKNHRRNGSNVSIQSVSTSTTSEPSSPMNQ, FFRTPPPSAKTSLSRRPTVSSPSADSS, RLNKVRHSQSTEQKDAPRKDSIGGSSKDK, and RSPSTSSSMNHHAPLAPPSPSS. The segment covering 689–707 has biased composition (low complexity); it reads SNVSIQSVSTSTTSEPSSP. The span at 983–1001 shows a compositional bias: polar residues; sequence AKTSLSRRPTVSSPSADSS. A compositionally biased stretch (basic and acidic residues) spans 1028-1045; sequence EQKDAPRKDSIGGSSKDK. Residues 1294 to 1314 traverse the membrane as a helical segment; that stretch reads LLLSLFSQTATIDWIFLFCLL. A compositionally biased stretch (basic and acidic residues) spans 1385 to 1403; it reads SPDNENRKASQKTSADDPK. Residues 1385-1447 form a disordered region; that stretch reads SPDNENRKAS…SADRAHKSVK (63 aa). Residues 1411-1424 show a composition bias toward polar residues; the sequence is SGSSKLNNSFSNPK. Over residues 1431-1447 the composition is skewed to basic and acidic residues; that stretch reads GRRERSRSADRAHKSVK.

This sequence belongs to the RIC1 family. In terms of assembly, component of a guanine nucleotide exchange factor (GEF) complex.

Its subcellular location is the membrane. Probable component of a guanine nucleotide exchange factor (GEF) that may be required for efficient fusion of endosome-derived vesicles with the Golgi. The sequence is that of Guanine nucleotide exchange factor subunit R06F6.8 from Caenorhabditis elegans.